We begin with the raw amino-acid sequence, 59 residues long: Small ribosomal subunit protein bS21 (59 aa).

Belongs to the bacterial ribosomal protein bS21 family.

The sequence is that of Small ribosomal subunit protein bS21 from Acaryochloris marina (strain MBIC 11017).